Consider the following 293-residue polypeptide: 33 kDa chaperonin (293 aa).

2 disulfides stabilise this stretch: C239-C241 and C272-C275.

It belongs to the HSP33 family. Under oxidizing conditions two disulfide bonds are formed involving the reactive cysteines. Under reducing conditions zinc is bound to the reactive cysteines and the protein is inactive.

Its subcellular location is the cytoplasm. Its function is as follows. Redox regulated molecular chaperone. Protects both thermally unfolding and oxidatively damaged proteins from irreversible aggregation. Plays an important role in the bacterial defense system toward oxidative stress. The polypeptide is 33 kDa chaperonin (Limosilactobacillus fermentum (strain NBRC 3956 / LMG 18251) (Lactobacillus fermentum)).